A 627-amino-acid chain; its full sequence is UvrABC system protein C (627 aa).

A GIY-YIG domain is found at Asn-22 to Val-100. Residues Gln-210 to Val-245 enclose the UVR domain.

This sequence belongs to the UvrC family. In terms of assembly, interacts with UvrB in an incision complex.

It is found in the cytoplasm. Its function is as follows. The UvrABC repair system catalyzes the recognition and processing of DNA lesions. UvrC both incises the 5' and 3' sides of the lesion. The N-terminal half is responsible for the 3' incision and the C-terminal half is responsible for the 5' incision. The protein is UvrABC system protein C of Brucella abortus biovar 1 (strain 9-941).